The sequence spans 92 residues: Large ribosomal subunit protein eL43 (92 aa).

A C4-type zinc finger spans residues 39–60 (CEFCGKYAVKRKAVGIWGCKAC).

This sequence belongs to the eukaryotic ribosomal protein eL43 family.

This chain is Large ribosomal subunit protein eL43 (RPL37A), found in Gossypium hirsutum (Upland cotton).